A 131-amino-acid chain; its full sequence is Translation initiation factor 5A (131 aa).

The residue at position 37 (Lys-37) is a Hypusine.

The protein belongs to the eIF-5A family.

Its subcellular location is the cytoplasm. Functions by promoting the formation of the first peptide bond. The sequence is that of Translation initiation factor 5A (eIF5A) from Methanococcus maripaludis (strain C6 / ATCC BAA-1332).